A 114-amino-acid polypeptide reads, in one-letter code: Biofilm growth-associated repressor (114 aa).

One can recognise an HTH arsR-type domain in the interval 17–111 (DMEKRANEVA…ALYTIFCAQE (95 aa)). The segment at residues 51-74 (VGELEQQIGIGQPTLSQQLGVLRE) is a DNA-binding region (H-T-H motif).

In terms of biological role, represses an operon that comprises itself, XF_0764, XF_0765, XF_0766 and blh. Binds to a palindromic AT-rich sequence spanning the -10 region of the blh promoter and blocks transcription of the operon. The sequence is that of Biofilm growth-associated repressor (bigR) from Xylella fastidiosa (strain 9a5c).